Reading from the N-terminus, the 875-residue chain is Valine--tRNA ligase (875 aa).

The 'HIGH' region motif lies at 45–55 (PNVTGVLHMGH). The short motif at 524 to 528 (KMSKS) is the 'KMSKS' region element. Lysine 527 lines the ATP pocket. Positions 803-837 (VKLLIDKTKELIRLEKQLEKYKMLKISVSKKLENE) form a coiled coil.

It belongs to the class-I aminoacyl-tRNA synthetase family. ValS type 1 subfamily. Monomer.

Its subcellular location is the cytoplasm. It carries out the reaction tRNA(Val) + L-valine + ATP = L-valyl-tRNA(Val) + AMP + diphosphate. Catalyzes the attachment of valine to tRNA(Val). As ValRS can inadvertently accommodate and process structurally similar amino acids such as threonine, to avoid such errors, it has a 'posttransfer' editing activity that hydrolyzes mischarged Thr-tRNA(Val) in a tRNA-dependent manner. The sequence is that of Valine--tRNA ligase from Borrelia garinii subsp. bavariensis (strain ATCC BAA-2496 / DSM 23469 / PBi) (Borreliella bavariensis).